The primary structure comprises 514 residues: Cytochrome P450 monooxygenase aneD (514 aa).

Residues 6–26 traverse the membrane as a helical segment; that stretch reads ICTLLAVIATTSLGLLFLSII. Asparagine 113, asparagine 261, and asparagine 347 each carry an N-linked (GlcNAc...) asparagine glycan. Cysteine 424 provides a ligand contact to heme.

Belongs to the cytochrome P450 family. Heme serves as cofactor.

The protein resides in the membrane. It carries out the reaction asperaculane D + reduced [NADPH--hemoprotein reductase] + O2 = asperaculane E + oxidized [NADPH--hemoprotein reductase] + H2O + H(+). It participates in secondary metabolite biosynthesis. Its function is as follows. Cytochrome P450 monooxygenase; part of the gene cluster that mediates the biosynthesis of aculenes, a unique type of norsesquiterpenes that contain a nordaucane skeleton linked to an L-proline moiety and are of mixed biosynthetic origin. The pathway begins with the synthesis of dauca-4,7-diene by the terpene cyclase aneC using farnesyl pyrophosphate (FPP) as substrate. The cytochrome P450 monooxygenase aneF then performs the initial oxidation at C-12 of dauca-4,7-diene to yield asperaculane D. Asperaculane D is substrate of the cytochrome P450 monooxygenase aneD for C-10 hydroxylation to yield asperaculane E. The cytochrome P450 monooxygenase aneG then converts asperaculane E into aculene D via C-2 oxidation. The monomodular nonribosomal peptide synthtase aneB adenylates L-proline and the thiohydrolase aneE transfers this activated L-proline derivative to aculenes D and C to produce respectively aculenes B and A. The dioxygenase aneA converts aculene D into aculene C, and aculene B into aculene A by introducing the 5,6-alkene moiety. Asperculanes A, B, C and F, as well as 14-prolyl asperculane C, might be shunt products of the pathway. In Aspergillus aculeatus (strain ATCC 16872 / CBS 172.66 / WB 5094), this protein is Cytochrome P450 monooxygenase aneD.